The following is a 464-amino-acid chain: Chromosomal replication initiator protein DnaA (464 aa).

Residues 1-82 (MKNAAELWHN…GSRLDIQFIE (82 aa)) are domain I, interacts with DnaA modulators. Residues 82 to 125 (EEGQAKHMLDRQNEEVEVMEVAPAKTKAQKTPKSSDELVMSELG) form a domain II region. Positions 126–342 (QLNEKYTFDT…GALTRVIAYA (217 aa)) are domain III, AAA+ region. ATP contacts are provided by Gly170, Gly172, Lys173, and Thr174. A domain IV, binds dsDNA region spans residues 343–464 (NLVGRTIDPN…EQIKHELKHS (122 aa)).

This sequence belongs to the DnaA family. In terms of assembly, oligomerizes as a right-handed, spiral filament on DNA at oriC.

The protein resides in the cytoplasm. Functionally, plays an essential role in the initiation and regulation of chromosomal replication. ATP-DnaA binds to the origin of replication (oriC) to initiate formation of the DNA replication initiation complex once per cell cycle. Binds the DnaA box (a 9 base pair repeat at the origin) and separates the double-stranded (ds)DNA. Forms a right-handed helical filament on oriC DNA; dsDNA binds to the exterior of the filament while single-stranded (ss)DNA is stabiized in the filament's interior. The ATP-DnaA-oriC complex binds and stabilizes one strand of the AT-rich DNA unwinding element (DUE), permitting loading of DNA polymerase. After initiation quickly degrades to an ADP-DnaA complex that is not apt for DNA replication. Binds acidic phospholipids. This Exiguobacterium sibiricum (strain DSM 17290 / CCUG 55495 / CIP 109462 / JCM 13490 / 255-15) protein is Chromosomal replication initiator protein DnaA.